Reading from the N-terminus, the 167-residue chain is Arginine repressor (167 aa).

It belongs to the ArgR family.

It is found in the cytoplasm. It participates in amino-acid biosynthesis; L-arginine biosynthesis [regulation]. Its function is as follows. Regulates arginine biosynthesis genes. The protein is Arginine repressor of Mycobacterium leprae (strain Br4923).